The sequence spans 119 residues: Fluoride-specific ion channel FluC (119 aa).

A run of 3 helical transmembrane segments spans residues 37 to 54 (LFAN…AETV), 61 to 83 (LLLI…ETVT), and 93 to 112 (ALSN…WLGL). Na(+) contacts are provided by Gly-69 and Thr-72.

Belongs to the fluoride channel Fluc/FEX (TC 1.A.43) family.

The protein localises to the cell inner membrane. It carries out the reaction fluoride(in) = fluoride(out). Na(+) is not transported, but it plays an essential structural role and its presence is essential for fluoride channel function. Functionally, fluoride-specific ion channel. Important for reducing fluoride concentration in the cell, thus reducing its toxicity. The chain is Fluoride-specific ion channel FluC from Neisseria meningitidis serogroup C (strain 053442).